A 94-amino-acid chain; its full sequence is MNIRPLGDRVVVKMVETEETTKSGIVLPGSAKEKPQVAEVVAVGPGTVVDGKEVKMEVKVGDKVIISKYAGTEVKFDGQEYTILRQNDILAVVE.

This sequence belongs to the GroES chaperonin family. As to quaternary structure, heptamer of 7 subunits arranged in a ring. Interacts with the chaperonin GroEL.

The protein resides in the cytoplasm. Functionally, together with the chaperonin GroEL, plays an essential role in assisting protein folding. The GroEL-GroES system forms a nano-cage that allows encapsulation of the non-native substrate proteins and provides a physical environment optimized to promote and accelerate protein folding. GroES binds to the apical surface of the GroEL ring, thereby capping the opening of the GroEL channel. In Acetivibrio thermocellus (strain ATCC 27405 / DSM 1237 / JCM 9322 / NBRC 103400 / NCIMB 10682 / NRRL B-4536 / VPI 7372) (Clostridium thermocellum), this protein is Co-chaperonin GroES.